A 238-amino-acid chain; its full sequence is MSTIKIEKKSQLVKEVFDSVASRYDTMNDIMSLGMHRLWKDKMVNSVHFTKNSKVLDVAGGTGDIAIRVVRKEPSAKVTVCDINQNMLNRGRDKAINSNQINFDWVCASAESLPFEDSEFDYCTIAFGIRNVSDRKKALNEAHRVLKPHGKFICLEFAPMHYQNEIFTKLYDLYSFKVIPKIGSIVAKDKSSYEYLVRSIREFPTQADFKMEIEEVGFKNVEFHNMSYGIVALHIGTK.

S-adenosyl-L-methionine-binding residues include T62 and D82.

This sequence belongs to the class I-like SAM-binding methyltransferase superfamily. MenG/UbiE family.

The catalysed reaction is a 2-demethylmenaquinol + S-adenosyl-L-methionine = a menaquinol + S-adenosyl-L-homocysteine + H(+). The enzyme catalyses a 2-methoxy-6-(all-trans-polyprenyl)benzene-1,4-diol + S-adenosyl-L-methionine = a 5-methoxy-2-methyl-3-(all-trans-polyprenyl)benzene-1,4-diol + S-adenosyl-L-homocysteine + H(+). It functions in the pathway quinol/quinone metabolism; menaquinone biosynthesis; menaquinol from 1,4-dihydroxy-2-naphthoate: step 2/2. Its pathway is cofactor biosynthesis; ubiquinone biosynthesis. Methyltransferase required for the conversion of demethylmenaquinol (DMKH2) to menaquinol (MKH2) and the conversion of 2-polyprenyl-6-methoxy-1,4-benzoquinol (DDMQH2) to 2-polyprenyl-3-methyl-6-methoxy-1,4-benzoquinol (DMQH2). This chain is Ubiquinone/menaquinone biosynthesis C-methyltransferase UbiE, found in Wolbachia pipientis wMel.